Consider the following 496-residue polypeptide: Gamma-aminobutyric acid receptor subunit beta-like (496 aa).

A signal peptide (or 27) is located at residues 1–20 (MTCFTRVGVSCGLFFFLLGA). At 21–258 (QLQLIRCIRK…SFKLQRNIGY (238 aa)) the chain is on the extracellular side. 2 N-linked (GlcNAc...) asparagine glycosylation sites follow: Asn39 and Asn189. Residues Cys176 and Cys190 are joined by a disulfide bond. Helical transmembrane passes span 259-280 (FVFQTYLPSILIVMLSWVSFWI), 285-306 (TSARVALGITTVLTMTTISTGV), and 318-342 (AIDIYLVMCFVFVFAALLEYAAVNY). Residues 343 to 472 (TYWGKRAKKK…KIKDVNIIDK (130 aa)) are Cytoplasmic-facing. A helical transmembrane segment spans residues 473–494 (YSRMIFPISFLAFNLGYWLFYI).

The protein belongs to the ligand-gated ion channel (TC 1.A.9) family. Gamma-aminobutyric acid receptor (TC 1.A.9.5) subfamily. In terms of assembly, generally pentameric. There are five types of GABA(A) receptor chains: alpha, beta, gamma, delta, and rho. Interacts with Grd (alpha chain).

It localises to the postsynaptic cell membrane. Its subcellular location is the cell membrane. Its function is as follows. GABA, an inhibitory neurotransmitter, mediates neuronal inhibition by binding to the GABA receptor and opening an integral chloride channel. Combines with the ligand-gated ion channel subunit GRD to form cation-selective GABA-gated ion channels when coexpressed in Xenopus laevis oocytes. This Drosophila melanogaster (Fruit fly) protein is Gamma-aminobutyric acid receptor subunit beta-like (Lcch3).